A 217-amino-acid chain; its full sequence is Large ribosomal subunit protein uL3 (217 aa).

Belongs to the universal ribosomal protein uL3 family. As to quaternary structure, part of the 50S ribosomal subunit. Forms a cluster with proteins L14 and L19.

In terms of biological role, one of the primary rRNA binding proteins, it binds directly near the 3'-end of the 23S rRNA, where it nucleates assembly of the 50S subunit. The sequence is that of Large ribosomal subunit protein uL3 from Mycolicibacterium smegmatis (strain ATCC 700084 / mc(2)155) (Mycobacterium smegmatis).